The following is a 97-amino-acid chain: YcgL domain-containing protein PFL_1496 (97 aa).

Positions 3 to 87 constitute a YcgL domain; the sequence is RICSIYKSPR…AEDEYIEHLP (85 aa).

In Pseudomonas fluorescens (strain ATCC BAA-477 / NRRL B-23932 / Pf-5), this protein is YcgL domain-containing protein PFL_1496.